The primary structure comprises 208 residues: Sodium/potassium-transporting ATPase subunit beta-1-interacting protein 2 (208 aa).

A run of 4 helical transmembrane segments spans residues 1 to 23 (MGYC…CVLE), 35 to 55 (APIL…FGTI), 62 to 82 (ITGY…VICF), and 153 to 173 (LQIV…KCIT).

This sequence belongs to the NKAIN family. In terms of assembly, interacts with ATP1B1. In terms of tissue distribution, expressed in fetal brain. Weakly expressed in adult brain and thymus. Not expressed in any other normal tissue examined.

The protein resides in the cell membrane. In Homo sapiens (Human), this protein is Sodium/potassium-transporting ATPase subunit beta-1-interacting protein 2 (NKAIN2).